We begin with the raw amino-acid sequence, 364 residues long: Ribosomal RNA large subunit methyltransferase F (364 aa).

The interval 1–52 (MPKPAIKTAAKLAMSSAGKRGKPSTPKSLAKPQTTKPKTASKLKAKHGEQKR) is disordered. The segment covering 25–38 (TPKSLAKPQTTKPK) has biased composition (polar residues).

The protein belongs to the methyltransferase superfamily. METTL16/RlmF family.

The protein localises to the cytoplasm. It catalyses the reaction adenosine(1618) in 23S rRNA + S-adenosyl-L-methionine = N(6)-methyladenosine(1618) in 23S rRNA + S-adenosyl-L-homocysteine + H(+). Functionally, specifically methylates the adenine in position 1618 of 23S rRNA. The protein is Ribosomal RNA large subunit methyltransferase F of Shewanella sp. (strain ANA-3).